Reading from the N-terminus, the 81-residue chain is Short neurotoxin 2 (81 aa).

Positions 1 to 21 (MKTLLLTLVVVTIVCLDLGYT) are cleaved as a signal peptide. Disulfide bonds link C24-C43, C38-C60, C62-C73, and C74-C79.

It belongs to the three-finger toxin family. Short-chain subfamily. Type I alpha-neurotoxin sub-subfamily. As to expression, expressed by the venom gland.

It localises to the secreted. Functionally, binds to muscle nicotinic acetylcholine receptor (nAChR) and inhibit acetylcholine from binding to the receptor, thereby impairing neuromuscular transmission. The chain is Short neurotoxin 2 from Drysdalia coronoides (White-lipped snake).